The chain runs to 218 residues: Fibroblast growth factor 15 (218 aa).

An N-terminal signal peptide occupies residues 1 to 25 (MARKWNGRAVARALVLATLWLAVSG).

This sequence belongs to the heparin-binding growth factors family. In terms of assembly, interacts with MALRD1. Expressed in the developing brain.

The protein localises to the secreted. Functionally, involved in the suppression of bile acid biosynthesis through down-regulation of CYP7A1 expression. The polypeptide is Fibroblast growth factor 15 (Fgf15) (Mus musculus (Mouse)).